A 424-amino-acid chain; its full sequence is GTPase Obg (424 aa).

One can recognise an Obg domain in the interval 1 to 158 (MFVDRARIYI…LWVILELKLL (158 aa)). The OBG-type G domain maps to 159-330 (ADVGLIGFPN…LIYYAAQKLK (172 aa)). GTP is bound by residues 165–172 (GFPNVGKS), 190–194 (FTTIN), 212–215 (DIPG), 282–285 (NKMD), and 311–313 (SAA). 2 residues coordinate Mg(2+): S172 and T192. One can recognise an OCT domain in the interval 347 to 424 (YTAVEEEPFN…MYDLEFEYFR (78 aa)).

The protein belongs to the TRAFAC class OBG-HflX-like GTPase superfamily. OBG GTPase family. As to quaternary structure, monomer. The cofactor is Mg(2+).

It localises to the cytoplasm. In terms of biological role, an essential GTPase which binds GTP, GDP and possibly (p)ppGpp with moderate affinity, with high nucleotide exchange rates and a fairly low GTP hydrolysis rate. Plays a role in control of the cell cycle, stress response, ribosome biogenesis and in those bacteria that undergo differentiation, in morphogenesis control. This chain is GTPase Obg, found in Acetivibrio thermocellus (strain ATCC 27405 / DSM 1237 / JCM 9322 / NBRC 103400 / NCIMB 10682 / NRRL B-4536 / VPI 7372) (Clostridium thermocellum).